Consider the following 446-residue polypeptide: MHIVVVGLNNKTAPVSIREQVSFGEHEMKGAVVALRDEKSIFESVIVSTCNRTELYVVTDQPHTGRYYTKRFLANWFGLTMEELEPYLFIHEGFDAMKHLFRVTSGLDSMIVGETQILGQVKTSFFTAQKLETTGTVFNKLFKEAVTLAKRAHAETGIGENAVSVSAAAVTLAEQLLGSLEDKSIVVIGAGETGELTTLNLYEAGARDITVFNRTLAKAEEVANRFEGSAHSINEMQCGLLRADIVISSTGAKRAIIKREDIAAAQLFRSDRPFLLIDIAVPRDIEPTAGDLPGVHLYDVDDLTSIVQQNMAERMKEAAKIERRIEAAIAEFEGWMTTLGVVPIITELRDQSLKIQQETMQSLERKLPNMTNREKTVIGKHMKSIINQLLREPLSYIKDAAAKPDAEQRIAQFMDTFALDEELFDSAAEEMVLQEETTAERKAVNR.

Residues 49–52, Ser-109, 114–116, and Gln-120 each bind substrate; these read TCNR and ETQ. The active-site Nucleophile is Cys-50. 189–194 lines the NADP(+) pocket; the sequence is GAGETG.

It belongs to the glutamyl-tRNA reductase family. Homodimer.

It catalyses the reaction (S)-4-amino-5-oxopentanoate + tRNA(Glu) + NADP(+) = L-glutamyl-tRNA(Glu) + NADPH + H(+). Its pathway is porphyrin-containing compound metabolism; protoporphyrin-IX biosynthesis; 5-aminolevulinate from L-glutamyl-tRNA(Glu): step 1/2. In terms of biological role, catalyzes the NADPH-dependent reduction of glutamyl-tRNA(Glu) to glutamate 1-semialdehyde (GSA). In Exiguobacterium sibiricum (strain DSM 17290 / CCUG 55495 / CIP 109462 / JCM 13490 / 255-15), this protein is Glutamyl-tRNA reductase.